The chain runs to 173 residues: uncharacterized protein (173 aa).

This is an uncharacterized protein from Acanthamoeba polyphaga (Amoeba).